Here is a 390-residue protein sequence, read N- to C-terminus: Trehalose-phosphate phosphatase (390 aa).

Asp-150 functions as the Nucleophile in the catalytic mechanism. Mg(2+) contacts are provided by Asp-150, Asp-152, and Asp-333. 150-152 serves as a coordination point for substrate; sequence DFD.

This sequence belongs to the trehalose phosphatase family. Mg(2+) is required as a cofactor.

It carries out the reaction alpha,alpha-trehalose 6-phosphate + H2O = alpha,alpha-trehalose + phosphate. The protein operates within glycan biosynthesis; trehalose biosynthesis. Its function is as follows. Removes the phosphate from trehalose 6-phosphate to produce free trehalose. This is Trehalose-phosphate phosphatase (otsB) from Mycobacterium marinum (strain ATCC BAA-535 / M).